Reading from the N-terminus, the 335-residue chain is Nod factor export ATP-binding protein I (335 aa).

The segment covering Met-1–Glu-10 has biased composition (basic and acidic residues). Residues Met-1–Pro-22 are disordered. The region spanning Ile-37–Tyr-267 is the ABC transporter domain. An ATP-binding site is contributed by Gly-69 to Ser-76.

It belongs to the ABC transporter superfamily. Lipooligosaccharide exporter (TC 3.A.1.102) family. As to quaternary structure, the complex is composed of two ATP-binding proteins (NodI) and two transmembrane proteins (NodJ).

The protein localises to the cell inner membrane. In terms of biological role, part of the ABC transporter complex NodIJ involved in the export of the nodulation factors (Nod factors), the bacterial signal molecules that induce symbiosis and subsequent nodulation induction. Nod factors are LCO (lipo-chitin oligosaccharide), a modified beta-1,4-linked N-acetylglucosamine oligosaccharide. This subunit is responsible for energy coupling to the transport system. This is Nod factor export ATP-binding protein I from Rhizobium meliloti (Ensifer meliloti).